The primary structure comprises 1148 residues: MTLDKALVLRTCANNMADHCGLIWPASGTVESRYWQSTRRHENGLVGLLWGAGTSAFLSVHADARWIVCEVAVADIISLEEPGMVKFPRAEVVHVGDRISASHFISARQADPASTSTSTSTSTLTPMPTAIPTPMPAVASVTLPVAEQARHEVFDVASVSAAAAPVNTLPVTTPQNLQTATYGSTLSGDNHSRLIAGYGSNETAGNHSDLIAGYGSTGTAGYGSTQTSGEDSSLTAGYGSTQTAQEGSNLTAGYGSTGTAGSDSSLIAGYGSTQTSGGDSSLTAGYGSTQTAQEGSNLTAGYGSTGTAGVDSSLIAGYGSTQTSGSDSALTAGYGSTQTAQEGSNLTAGYGSTGTAGSDSSLIAGYGSTQTSGSDSSLTAGYGSTQTAQEGSNLTAGYGSTGTAGVDSSLIAGYGSTQTSGSDSALTAGYGSTQTAQEGSNLTAGYGSTGTAGADSSLIAGYGSTQTSGSESSLTAGYGSTQTAREGSTLTAGYGSTGTAGADSSLIAGYGSTQTSGSESSLTAGYGSTQTAQQGSVLTSGYGSTQTAGAASNLTTGYGSTGTAGHESFIIAGYGSTQTAGHKSILTAGYGSTQTARDGSYLIAGYGSTGTAGSGSSLIAGYGSTQTASYRSMLTAGYGSTQTAREHSDLVTGYGSTSTAGSNSSLIAGYGSTQTAGFKSILTAGYGSTQTAQERSDLVAGYGSTSTAGYSSSLIAGYGSTQTAGYESTLTAGYGSTQTAQENSSLTTGYGSTSTAGYSSSLIAGYGSTQTAGYESTLTAGYGSTQTAQERSDLVTGYGSTSTAGYASSLIAGYGSTQTAGYESTLTAGYGSTQTAQENSSLTTGYGSTSTAGFASSLIAGYGSTQTAGYKSTLTAGYGSTQTAEYGSSLTAGYGSTATAGQDSSLIAGYGSSLTSGIRSFLTAGYGSTLIAGLRSVLIAGYGSSLTSGIRSTLTAGYGSNQIASYGSSLIAGHESIQVAGNKSMLIAGKGSSQTAGFRSTLIAGAGSVQLAGDRSRLIAGADSNQTAGDRSKLLAGNNSYLTAGDRSKLTGGHDCTLMAGDQSRLTAGKNSVLTAGARSKLIGSEGSTLSAGEDSTLIFRLWDGKRYRQLVARTGENGVEADIPYYVNEDDDIVDKPDEDDDWIEVK.

Disordered stretches follow at residues 110–131 (ADPA…PTAI), 222–256 (YGST…GYGS), and 367–394 (GSTQ…GSNL). The span at 114–128 (STSTSTSTSTLTPMP) shows a compositional bias: low complexity. The octapeptide periodicity stretch occupies residues 180–1099 (ATYGSTLSGD…LSAGEDSTLI (920 aa)). The span at 230–250 (EDSSLTAGYGSTQTAQEGSNL) shows a compositional bias: polar residues.

The protein belongs to the bacterial ice nucleation protein family.

It is found in the cell outer membrane. In terms of biological role, ice nucleation proteins enable bacteria to nucleate crystallization in supercooled water. This Pseudomonas syringae protein is Ice nucleation protein (inaK).